The chain runs to 379 residues: UDP-4-amino-4-deoxy-L-arabinose--oxoglutarate aminotransferase (379 aa).

At Lys182 the chain carries N6-(pyridoxal phosphate)lysine.

It belongs to the DegT/DnrJ/EryC1 family. ArnB subfamily. Homodimer. Pyridoxal 5'-phosphate serves as cofactor.

It carries out the reaction UDP-4-amino-4-deoxy-beta-L-arabinose + 2-oxoglutarate = UDP-beta-L-threo-pentopyranos-4-ulose + L-glutamate. It functions in the pathway nucleotide-sugar biosynthesis; UDP-4-deoxy-4-formamido-beta-L-arabinose biosynthesis; UDP-4-deoxy-4-formamido-beta-L-arabinose from UDP-alpha-D-glucuronate: step 2/3. Its pathway is bacterial outer membrane biogenesis; lipopolysaccharide biosynthesis. Its function is as follows. Catalyzes the conversion of UDP-4-keto-arabinose (UDP-Ara4O) to UDP-4-amino-4-deoxy-L-arabinose (UDP-L-Ara4N). The modified arabinose is attached to lipid A and is required for resistance to polymyxin and cationic antimicrobial peptides. The chain is UDP-4-amino-4-deoxy-L-arabinose--oxoglutarate aminotransferase from Salmonella schwarzengrund (strain CVM19633).